Reading from the N-terminus, the 475-residue chain is Aminodeoxychorismate synthase component 1 (475 aa).

The protein belongs to the anthranilate synthase component I family. In terms of assembly, monomer. Heterodimer consisting of two non-identical subunits: a glutamine amidotransferase subunit (PabA) and a aminodeoxychorismate synthase subunit (PabB). The cofactor is Mg(2+).

It carries out the reaction chorismate + L-glutamine = 4-amino-4-deoxychorismate + L-glutamate. It functions in the pathway cofactor biosynthesis; tetrahydrofolate biosynthesis; 4-aminobenzoate from chorismate: step 1/2. Its function is as follows. Part of a heterodimeric complex that catalyzes the two-step biosynthesis of 4-amino-4-deoxychorismate (ADC), a precursor of p-aminobenzoate (PABA) and tetrahydrofolate. In the first step, a glutamine amidotransferase (PabA) generates ammonia as a substrate that, along with chorismate, is used in the second step, catalyzed by aminodeoxychorismate synthase (PabB) to produce ADC. In Streptomyces lividans, this protein is Aminodeoxychorismate synthase component 1 (pabB).